The sequence spans 788 residues: Endonuclease MutS2 (788 aa).

332–339 contacts ATP; the sequence is GPNTGGKT. One can recognise a Smr domain in the interval 713–788; that stretch reads IDLRGLDSEE…GTGVTVVELK (76 aa).

The protein belongs to the DNA mismatch repair MutS family. MutS2 subfamily. In terms of assembly, homodimer. Binds to stalled ribosomes, contacting rRNA.

In terms of biological role, endonuclease that is involved in the suppression of homologous recombination and thus may have a key role in the control of bacterial genetic diversity. Functionally, acts as a ribosome collision sensor, splitting the ribosome into its 2 subunits. Detects stalled/collided 70S ribosomes which it binds and splits by an ATP-hydrolysis driven conformational change. Acts upstream of the ribosome quality control system (RQC), a ribosome-associated complex that mediates the extraction of incompletely synthesized nascent chains from stalled ribosomes and their subsequent degradation. Probably generates substrates for RQC. The chain is Endonuclease MutS2 from Clostridium acetobutylicum (strain ATCC 824 / DSM 792 / JCM 1419 / IAM 19013 / LMG 5710 / NBRC 13948 / NRRL B-527 / VKM B-1787 / 2291 / W).